Here is a 953-residue protein sequence, read N- to C-terminus: Translation initiation factor IF-2 (953 aa).

Disordered regions lie at residues 52 to 241 and 279 to 363; these read KASK…QQEA and TKLK…TERK. Composition is skewed to basic and acidic residues over residues 80–89, 98–111, and 140–188; these read TGSEHVEKTQ, FKAE…EQAA, and QGDK…ENHK. A compositionally biased stretch (polar residues) spans 191-207; it reads RFTNQKKQGRQEPQSKS. A compositionally biased stretch (basic and acidic residues) spans 229-241; sequence RQSETRFRAQQEA. Residues 282 to 291 are compositionally biased toward polar residues; the sequence is KSSNISAKST. Basic and acidic residues predominate over residues 300–317; sequence ARPEKNRELTHHSQEGQK. Residues 322–338 show a composition bias toward low complexity; sequence SWNSQNQVRNQKNSNWN. Positions 339 to 348 are enriched in basic residues; the sequence is KNKKTKKGKN. The tr-type G domain occupies 454–623; sequence ERAPVVTIMG…LLVAEVEELK (170 aa). The tract at residues 463 to 470 is G1; the sequence is GHVDHGKT. Residue 463 to 470 participates in GTP binding; it reads GHVDHGKT. The tract at residues 488–492 is G2; the sequence is GITQH. Residues 509-512 form a G3 region; it reads DTPG. GTP-binding positions include 509-513 and 563-566; these read DTPGH and NKID. Positions 563 to 566 are G4; it reads NKID. The segment at 599 to 601 is G5; it reads SAK.

It belongs to the TRAFAC class translation factor GTPase superfamily. Classic translation factor GTPase family. IF-2 subfamily.

The protein resides in the cytoplasm. One of the essential components for the initiation of protein synthesis. Protects formylmethionyl-tRNA from spontaneous hydrolysis and promotes its binding to the 30S ribosomal subunits. Also involved in the hydrolysis of GTP during the formation of the 70S ribosomal complex. The chain is Translation initiation factor IF-2 from Streptococcus pyogenes serotype M4 (strain MGAS10750).